We begin with the raw amino-acid sequence, 952 residues long: Glutamate receptor 2.7 (952 aa).

Positions 1–32 (MKVMNPRKTNNTFMYYFVLFVCGFVLMEGCLG) are cleaved as a signal peptide. Residues 33-582 (QNQTTEIKVG…NTWVFLRPWS (550 aa)) are Extracellular-facing. Asparagine 34, asparagine 60, asparagine 355, asparagine 428, and asparagine 546 each carry an N-linked (GlcNAc...) asparagine glycan. A helical transmembrane segment spans residues 583 to 603 (LDLWVTTACFFVFIGFIVWIL). Residues 604 to 612 (EHRVNTDFR) are Cytoplasmic-facing. Residues 613-633 (GPPHHQIGTSFWFAFSTMNFA) traverse the membrane as a helical segment. The Cytoplasmic portion of the chain corresponds to 634–637 (HREK). Residues 638–658 (VVSNLARFVVLVWCFVVLVLI) traverse the membrane as a helical segment. Residues 659 to 821 (QSYTANLTSF…LSSNHLSLSS (163 aa)) lie on the Extracellular side of the membrane. N-linked (GlcNAc...) asparagine glycans are attached at residues asparagine 664, asparagine 728, asparagine 748, asparagine 784, and asparagine 809. Residues 822-842 (FWGLFLIAGIASFLALLIFVA) traverse the membrane as a helical segment. Residues 843–952 (NFLYEHKHTL…ESAIIQCEGE (110 aa)) are Cytoplasmic-facing. The span at 889–908 (VSSPITQGSSSPLTDQSTPL) shows a compositional bias: polar residues. Disordered stretches follow at residues 889–914 (VSSP…SPEQ) and 932–952 (FTTQ…CEGE).

The protein belongs to the glutamate-gated ion channel (TC 1.A.10.1) family. As to quaternary structure, may form heteromers. Expressed predominantly in leaves.

The protein localises to the membrane. Glutamate-gated receptor that probably acts as a non-selective cation channel. May be involved in light-signal transduction and calcium homeostasis via the regulation of calcium influx into cells. This Arabidopsis thaliana (Mouse-ear cress) protein is Glutamate receptor 2.7 (GLR2.7).